Here is a 563-residue protein sequence, read N- to C-terminus: 4-hydroxy-7-methoxy-3-oxo-3,4-dihydro-2H-1,4-benzoxazin-2-yl glucoside beta-D-glucosidase 2, chloroplastic (563 aa).

The transit peptide at 1 to 51 directs the protein to the chloroplast; sequence MAPLLAAAMNHAAHPVLRSHLGPNNESFSRHHLSSSPQSSKRRFNLSFTPR. The disordered stretch occupies residues 17-43; it reads LRSHLGPNNESFSRHHLSSSPQSSKRR. Residues Gln89, His193, and 241–242 contribute to the a beta-D-glucoside site; that span reads NE. The active-site Proton donor is the Glu242. An intrachain disulfide couples Cys261 to Cys267. A dimerization region spans residues 322-358; it reads SFLDEQAKERSMDINLGWFLEPVVRGDYPFSMRSLAR. A beta-D-glucoside is bound at residue Tyr384. 2 dimerization regions span residues 391 to 402 and 447 to 450; these read HIDISPKYSPVL and KYGN. Residues Glu457, Trp508, 515–516, and Tyr524 contribute to the a beta-D-glucoside site; that span reads EW. Glu457 functions as the Nucleophile in the catalytic mechanism.

Belongs to the glycosyl hydrolase 1 family. As to quaternary structure, homo- and heterodimer. In terms of tissue distribution, expressed in leaves only starting at day 6 after germination.

It is found in the plastid. It localises to the chloroplast. The enzyme catalyses Hydrolysis of terminal, non-reducing beta-D-glucosyl residues with release of beta-D-glucose.. The catalysed reaction is DIMBOA beta-D-glucoside + H2O = DIMBOA + D-glucose. It catalyses the reaction DIBOA beta-D-glucoside + H2O = DIBOA + D-glucose. Its function is as follows. Beta-glucosidase acting poorly on artificial aryl beta-glucosides. Has no activity toward the chromogenic substrate 6-bromo-2-naphthyl-beta-D-glucoside (6BNGlc). The sequence is that of 4-hydroxy-7-methoxy-3-oxo-3,4-dihydro-2H-1,4-benzoxazin-2-yl glucoside beta-D-glucosidase 2, chloroplastic (GLU2) from Zea mays (Maize).